Consider the following 151-residue polypeptide: Shadow of prion protein (151 aa).

Positions 1-24 are cleaved as a signal peptide; sequence MNWAPATCWALLLAAAFLCDSGAA. The segment at 89-113 is disordered; the sequence is WRRAAGPGERGLEDEEDGVPGGNGT. Asn-111 carries an N-linked (GlcNAc...) asparagine glycan. Gly-126 is lipidated: GPI-anchor amidated glycine. Positions 127–151 are cleaved as a propeptide — removed in mature form; sequence AGPTRGPRLCLVLGGALGALGLLRP.

The protein belongs to the SPRN family. Post-translationally, N-glycosylated. In terms of tissue distribution, mainly expressed in brain. In brain, it is expressed in hippocampus.

The protein localises to the cell membrane. Its function is as follows. Prion-like protein that has PrP(C)-like neuroprotective activity. May act as a modulator for the biological actions of normal and abnormal PrP. This chain is Shadow of prion protein (SPRN), found in Homo sapiens (Human).